A 359-amino-acid chain; its full sequence is Trans-enoyl reductase mpsG (359 aa).

The NADP(+) site is built by tyrosine 212, leucine 259, and threonine 278.

It belongs to the zinc-containing alcohol dehydrogenase family. As to quaternary structure, monomer.

It participates in secondary metabolite biosynthesis. In terms of biological role, trans-enoyl reductase; part of the gene cluster that mediates the biosynthesis of macrophasetins, 3-decalinoyltetramic acids (DTAs) which feature a tetramate (pyrrolidine-2,4-dione) unit connected to a decalin fragment and that have potent bioactivities. The PKS-NRPS mpsA together with its associated enoylreductase partner mpsG incorporate one unit of acetyl-CoA, seven units of malonyl-CoA, and one unit of L-alanine to assemble the linear tetramic acid intermediate corresponding to the backbone of macrophasetins. Without the Diels-Alderase mpsD, the mpsA/G product can undergo the non-enzymatic intramolecular Diels-Alder (IMDA) reaction to generate both macrophasetin A and macrophasetin B. Catalyzed by mpsD, the linear tetramic acid intermediate is thoroughly converted to macrophasetin A via the endo-IMDA reaction in a regioselective and stereoselective manner. Finally, the cytochrome P450 monooxygenase mpsF catalyzes the hydroxylation at C20 to yield the end product macrophasetin C. The protein is Trans-enoyl reductase mpsG of Macrophomina phaseolina (strain MS6) (Charcoal rot fungus).